The chain runs to 455 residues: Asparagine--tRNA ligase (455 aa).

The protein belongs to the class-II aminoacyl-tRNA synthetase family. In terms of assembly, homodimer.

It is found in the cytoplasm. It carries out the reaction tRNA(Asn) + L-asparagine + ATP = L-asparaginyl-tRNA(Asn) + AMP + diphosphate + H(+). The sequence is that of Asparagine--tRNA ligase from Mycoplasma pneumoniae (strain ATCC 29342 / M129 / Subtype 1) (Mycoplasmoides pneumoniae).